The sequence spans 587 residues: MATCWPALWAYRFYLIVLCLPIFLLPLPLIVQTKEAYCAYSIILMALLWCTEALPLAVTALFPIVLFPLMGIMDASEVCIEYFKDTNILFVGGLMVAIAVEHWNLHKRIALQVLLIIGVRPALLLLGFMLVTAFLSMWISNTATTAMMVPIGHAVLEQLQGSKKDVEGGNNNPTFELQEECPQKEVTKLDNGQPVSAPSEPRTQKTQEHHRFSQGLSLCICYSASIGGIATLTGTTPNLVLQGQVNSLFPQNGNVVNFASWFGFAFPTMIILLLLAWLWLQVLFLGVNFRKNFGFGEGEEERKQAAFQVIKTQYRLLGPMSFAEKTVTVLFVLLVVLWFTREPGFFPGWGDTVFANEKGQSMASDGTVAIFISLVMFIIPSKIPGLMQDPKKPGKLKAPPAILTWKTVNDKMPWNIVILLGGGFALAKGSEQSGLSEWLGDKLTPLQHIPPSATAVILCLLIAIFTECTSNVATTTLFLPILASMAQAICLHPLYVMLPCTLAASLAFMLPVATPPNAIVFSFGGLKVSDMARAGFLLNIIGVLAITLSINSWSIPIFKLDTFPSWAHSNTSQCLLNPSNSTVPGGL.

4 helical membrane-spanning segments follow: residues 13–33 (FYLI…IVQT), 53–73 (ALPL…MGIM), 86–106 (TNIL…WNLH), and 136–156 (SMWI…HAVL). A disordered region spans residues 188 to 208 (KLDNGQPVSAPSEPRTQKTQE). The next 8 membrane-spanning stretches (helical) occupy residues 264 to 284 (FAFP…QVLF), 329 to 349 (VLFV…FPGW), 367 to 387 (TVAI…PGLM), 407 to 427 (TVND…FALA), 445 to 465 (PLQH…IAIF), 477 to 497 (LFLP…LYVM), 506 to 526 (LAFM…FGGL), and 535 to 555 (GFLL…SWSI).

Belongs to the SLC13A/DASS transporter (TC 2.A.47) family. NADC subfamily. Expressed in large and small intestine and in the kidney proximal tubules.

It is found in the apical cell membrane. It catalyses the reaction succinate(out) + 3 Na(+)(out) = succinate(in) + 3 Na(+)(in). The enzyme catalyses fumarate(out) + 3 Na(+)(out) = fumarate(in) + 3 Na(+)(in). The catalysed reaction is 2-oxoglutarate(out) + 3 Na(+)(out) = 2-oxoglutarate(in) + 3 Na(+)(in). Li(+) decreases succinate transport in the presence of Na(+), by competing at one of the three cation binding sites. Functionally, low-affinity sodium-dicarboxylate cotransporter, that mediates the entry of citric acid cycle intermediates, such as succinate, citrate, fumarate and alpha-ketoglutarate (2-oxoglutarate) into the small intestine and renal proximal tubule. Transports the dicarboxylate into the cell with a probable stoichiometry of 3 Na(+) for 1 divalent dicarboxylate, rendering the process electrogenic. Citrate is transported in protonated form as a divalent anion, rather than the trivalent form which is normally found in blood. Has a critical role in renal dicarboxylate transport. In Rattus norvegicus (Rat), this protein is Solute carrier family 13 member 2 (Slc13a2).